The sequence spans 889 residues: Alanine--tRNA ligase (889 aa).

4 residues coordinate Zn(2+): His-574, His-578, Cys-676, and His-680.

The protein belongs to the class-II aminoacyl-tRNA synthetase family. The cofactor is Zn(2+).

Its subcellular location is the cytoplasm. The catalysed reaction is tRNA(Ala) + L-alanine + ATP = L-alanyl-tRNA(Ala) + AMP + diphosphate. Functionally, catalyzes the attachment of alanine to tRNA(Ala) in a two-step reaction: alanine is first activated by ATP to form Ala-AMP and then transferred to the acceptor end of tRNA(Ala). Also edits incorrectly charged Ser-tRNA(Ala) and Gly-tRNA(Ala) via its editing domain. In Thermobifida fusca (strain YX), this protein is Alanine--tRNA ligase.